Consider the following 645-residue polypeptide: L-aspartate oxidase, chloroplastic (645 aa).

The N-terminal 70 residues, 1–70 (MAALMNGFGS…RMRHKVGSIR (70 aa)), are a transit peptide targeting the chloroplast. FAD contacts are provided by residues 92–95 (SGVA), Lys114, 121–128 (NTNYAQGG), and Asp292. Residue Arg368 is the Proton donor/acceptor of the active site. Residues Glu453 and 469–470 (SL) contribute to the FAD site.

It belongs to the FAD-dependent oxidoreductase 2 family. NadB subfamily. Requires FAD as cofactor.

It is found in the plastid. The protein localises to the chloroplast. It carries out the reaction L-aspartate + O2 = iminosuccinate + H2O2. It functions in the pathway cofactor biosynthesis; NAD(+) biosynthesis; iminoaspartate from L-aspartate (oxidase route): step 1/1. Catalyzes the oxidation of L-aspartate to iminoaspartate. This Oryza sativa subsp. japonica (Rice) protein is L-aspartate oxidase, chloroplastic.